Here is a 45-residue protein sequence, read N- to C-terminus: Psychimicin (45 aa).

3 cysteine pairs are disulfide-bonded: cysteine 10/cysteine 24, cysteine 14/cysteine 36, and cysteine 25/cysteine 42.

Monomer. As to expression, hemolymph.

It is found in the secreted. Its function is as follows. Has antimicrobial activity. Is particularly active against fungi, and to a lesser extent against Gram-positive and Gram-negative bacteria. This is Psychimicin from Oiketicus kirbyi (Bagworm moth).